The following is a 238-amino-acid chain: tRNA (guanine-N(7)-)-methyltransferase (238 aa).

Residues glutamate 68, glutamate 93, aspartate 120, and aspartate 143 each coordinate S-adenosyl-L-methionine. Aspartate 143 is an active-site residue. Substrate is bound by residues lysine 147, aspartate 179, and 216 to 219 (TKFE).

This sequence belongs to the class I-like SAM-binding methyltransferase superfamily. TrmB family.

It catalyses the reaction guanosine(46) in tRNA + S-adenosyl-L-methionine = N(7)-methylguanosine(46) in tRNA + S-adenosyl-L-homocysteine. Its pathway is tRNA modification; N(7)-methylguanine-tRNA biosynthesis. In terms of biological role, catalyzes the formation of N(7)-methylguanine at position 46 (m7G46) in tRNA. This chain is tRNA (guanine-N(7)-)-methyltransferase, found in Shewanella sp. (strain W3-18-1).